The chain runs to 500 residues: L-arabinose isomerase (500 aa).

Positions 306, 333, 350, and 450 each coordinate Mn(2+).

It belongs to the arabinose isomerase family. Homohexamer. Mn(2+) serves as cofactor.

It carries out the reaction beta-L-arabinopyranose = L-ribulose. It participates in carbohydrate degradation; L-arabinose degradation via L-ribulose; D-xylulose 5-phosphate from L-arabinose (bacterial route): step 1/3. Catalyzes the conversion of L-arabinose to L-ribulose. The chain is L-arabinose isomerase from Salmonella arizonae (strain ATCC BAA-731 / CDC346-86 / RSK2980).